The following is a 427-amino-acid chain: Serine--tRNA ligase (427 aa).

Residue 236–238 (TAE) participates in L-serine binding. 267–269 (RSE) provides a ligand contact to ATP. Glu290 provides a ligand contact to L-serine. Residue 354–357 (EISS) coordinates ATP. Ser388 contributes to the L-serine binding site.

The protein belongs to the class-II aminoacyl-tRNA synthetase family. Type-1 seryl-tRNA synthetase subfamily. In terms of assembly, homodimer. The tRNA molecule binds across the dimer.

The protein resides in the cytoplasm. The catalysed reaction is tRNA(Ser) + L-serine + ATP = L-seryl-tRNA(Ser) + AMP + diphosphate + H(+). The enzyme catalyses tRNA(Sec) + L-serine + ATP = L-seryl-tRNA(Sec) + AMP + diphosphate + H(+). It functions in the pathway aminoacyl-tRNA biosynthesis; selenocysteinyl-tRNA(Sec) biosynthesis; L-seryl-tRNA(Sec) from L-serine and tRNA(Sec): step 1/1. In terms of biological role, catalyzes the attachment of serine to tRNA(Ser). Is also able to aminoacylate tRNA(Sec) with serine, to form the misacylated tRNA L-seryl-tRNA(Sec), which will be further converted into selenocysteinyl-tRNA(Sec). The sequence is that of Serine--tRNA ligase from Psychrobacter arcticus (strain DSM 17307 / VKM B-2377 / 273-4).